Here is a 99-residue protein sequence, read N- to C-terminus: Goannatyrotoxin-Vere1 (99 aa).

Residues 1 to 28 form the signal peptide; it reads MIASMKPWPLVMVAALCILFCLGTLVDA. The residue at position 64 (Tyr64) is a Tyrosine amide. The propeptide at 68–99 is C-terminal extension; sequence SSPETLMSELIFGENSNSDHSSRSRFDDSYMW.

This sequence belongs to the NPY family. In terms of tissue distribution, expressed by the mandibular venom gland.

It localises to the secreted. Its function is as follows. Shows a potent unique triphasic action, rapid biphasic hypertension followed by prolonged hypotension. The sequence is that of Goannatyrotoxin-Vere1 from Varanus eremius (Rusty desert monitor).